A 352-amino-acid polypeptide reads, in one-letter code: Isoflavone-7-O-methyltransferase 6 (352 aa).

118–127 (VLDPTLSGSY) lines the substrate pocket. S-adenosyl-L-methionine-binding residues include Gly-196, Asp-219, Asp-239, Met-240, and Lys-253. The Proton acceptor role is filled by His-257.

Belongs to the class I-like SAM-binding methyltransferase superfamily. Cation-independent O-methyltransferase family. COMT subfamily. Homodimer.

The catalysed reaction is a 7-hydroxyisoflavone + S-adenosyl-L-methionine = a 7-methoxyisoflavone + S-adenosyl-L-homocysteine + H(+). Its pathway is phytoalexin biosynthesis; medicarpin biosynthesis. Its function is as follows. Transfers a methyl group to 7-hydroxyls of the isoflavones daidzein, genistein and 6,7,4'-trihydroxyisoflavone. Can also methylate (+)6a-hydroxymaackiain with lower efficiency. This is Isoflavone-7-O-methyltransferase 6 from Medicago sativa (Alfalfa).